A 293-amino-acid polypeptide reads, in one-letter code: Ribosomal RNA small subunit methyltransferase A (293 aa).

S-adenosyl-L-methionine-binding residues include Asn-36, Leu-38, Gly-63, Glu-84, Asp-111, and Asn-132.

The protein belongs to the class I-like SAM-binding methyltransferase superfamily. rRNA adenine N(6)-methyltransferase family. RsmA subfamily.

Its subcellular location is the cytoplasm. The catalysed reaction is adenosine(1518)/adenosine(1519) in 16S rRNA + 4 S-adenosyl-L-methionine = N(6)-dimethyladenosine(1518)/N(6)-dimethyladenosine(1519) in 16S rRNA + 4 S-adenosyl-L-homocysteine + 4 H(+). Functionally, specifically dimethylates two adjacent adenosines (A1518 and A1519) in the loop of a conserved hairpin near the 3'-end of 16S rRNA in the 30S particle. May play a critical role in biogenesis of 30S subunits. This Treponema denticola (strain ATCC 35405 / DSM 14222 / CIP 103919 / JCM 8153 / KCTC 15104) protein is Ribosomal RNA small subunit methyltransferase A.